A 266-amino-acid polypeptide reads, in one-letter code: 3-methyl-2-oxobutanoate hydroxymethyltransferase 2 (266 aa).

Asp-45 and Asp-84 together coordinate Mg(2+). Residues 45 to 46, Asp-84, and Lys-112 each bind 3-methyl-2-oxobutanoate; that span reads DS. Glu-114 contributes to the Mg(2+) binding site. Glu-181 acts as the Proton acceptor in catalysis.

The protein belongs to the PanB family. Homodecamer; pentamer of dimers. It depends on Mg(2+) as a cofactor.

It localises to the cytoplasm. The catalysed reaction is 3-methyl-2-oxobutanoate + (6R)-5,10-methylene-5,6,7,8-tetrahydrofolate + H2O = 2-dehydropantoate + (6S)-5,6,7,8-tetrahydrofolate. It participates in cofactor biosynthesis; (R)-pantothenate biosynthesis; (R)-pantoate from 3-methyl-2-oxobutanoate: step 1/2. Its function is as follows. Catalyzes the reversible reaction in which hydroxymethyl group from 5,10-methylenetetrahydrofolate is transferred onto alpha-ketoisovalerate to form ketopantoate. The sequence is that of 3-methyl-2-oxobutanoate hydroxymethyltransferase 2 from Pseudomonas entomophila (strain L48).